We begin with the raw amino-acid sequence, 366 residues long: Peptide chain release factor 2 (366 aa).

The residue at position 251 (Q251) is an N5-methylglutamine.

This sequence belongs to the prokaryotic/mitochondrial release factor family. In terms of processing, methylated by PrmC. Methylation increases the termination efficiency of RF2.

Its subcellular location is the cytoplasm. Functionally, peptide chain release factor 2 directs the termination of translation in response to the peptide chain termination codons UGA and UAA. The protein is Peptide chain release factor 2 (prfB) of Listeria monocytogenes serovar 1/2a (strain ATCC BAA-679 / EGD-e).